Reading from the N-terminus, the 363-residue chain is MSAIFNFCAGPAMLPPAVMQKAQKELLNWNGQGVSVMEVSHRSKEFIALTEQAEADLRQLMDIPFNYHVLFMHGGGRGQFSAVVNNFLGNDGKALYLVDGSWSKAAVEEAEKLAGKDKIDTIDIVSTVQGKREVSIPDLTQIDKDYRYLHYCPNETVDGIEIFESINSPWPVIADMSSNILSRKIDVSQFGLIYAGAQKNIGPSGLSIVIVRDDMLVLPSLPQSSIMDYRLAVENDSMYNTPPTFAWYLAAEVFSWLKSVGGVCEMEKLNLEKAKRLYQCIDELDFYVSGVAKQNRSRMNVTFQLTNSELNSQFLEEAQVAGLVALKGHRSVGGMRASIYNAMPLEGVDTLVEFMQAFAAKHS.

Residue R42 participates in L-glutamate binding. Pyridoxal 5'-phosphate-binding positions include 76–77 (GR), W102, T156, D175, and Q198. K199 is modified (N6-(pyridoxal phosphate)lysine). 240–241 (NT) lines the pyridoxal 5'-phosphate pocket.

The protein belongs to the class-V pyridoxal-phosphate-dependent aminotransferase family. SerC subfamily. In terms of assembly, homodimer. Pyridoxal 5'-phosphate is required as a cofactor.

Its subcellular location is the cytoplasm. It catalyses the reaction O-phospho-L-serine + 2-oxoglutarate = 3-phosphooxypyruvate + L-glutamate. The enzyme catalyses 4-(phosphooxy)-L-threonine + 2-oxoglutarate = (R)-3-hydroxy-2-oxo-4-phosphooxybutanoate + L-glutamate. It functions in the pathway amino-acid biosynthesis; L-serine biosynthesis; L-serine from 3-phospho-D-glycerate: step 2/3. The protein operates within cofactor biosynthesis; pyridoxine 5'-phosphate biosynthesis; pyridoxine 5'-phosphate from D-erythrose 4-phosphate: step 3/5. Its function is as follows. Catalyzes the reversible conversion of 3-phosphohydroxypyruvate to phosphoserine and of 3-hydroxy-2-oxo-4-phosphonooxybutanoate to phosphohydroxythreonine. This chain is Phosphoserine aminotransferase, found in Shewanella halifaxensis (strain HAW-EB4).